Here is a 329-residue protein sequence, read N- to C-terminus: Sex comb on midleg-like protein 1 (329 aa).

Phosphoserine is present on residues S138 and S238. One can recognise an SAM domain in the interval 258 to 325; it reads WSVEAVVLFL…YYIDRLKQGK (68 aa).

It belongs to the SCM family.

Its subcellular location is the nucleus. Its function is as follows. Putative Polycomb group (PcG) protein. PcG proteins act by forming multiprotein complexes, which are required to maintain the transcriptionally repressive state of homeotic genes throughout development. May be involved in spermatogenesis during sexual maturation. In Nomascus leucogenys (Northern white-cheeked gibbon), this protein is Sex comb on midleg-like protein 1 (SCML1).